Here is a 121-residue protein sequence, read N- to C-terminus: Piercer of microtubule wall 2 protein (121 aa).

Over residues Met-1 to Ser-10 the composition is skewed to basic and acidic residues. The disordered stretch occupies residues Met-1–Val-29.

It belongs to the PIERCE2 family. Microtubule inner protein component of sperm flagellar doublet microtubules. Interacts with CFAP53, ODAD1 and ODAD3; the interactions link the outer dynein arms docking complex (ODA-DC) to the internal microtubule inner proteins (MIP) in cilium axoneme. In terms of tissue distribution, expressed in airway epithelial cells.

The protein resides in the cytoplasm. It is found in the cytoskeleton. The protein localises to the cilium axoneme. Its subcellular location is the flagellum axoneme. In terms of biological role, microtubule inner protein involved in the attachment of outer dynein arms (ODAs) to dynein-decorated doublet microtubules (DMTs) in cilia axoneme, which is required for motile cilia beating. This is Piercer of microtubule wall 2 protein from Homo sapiens (Human).